Here is an 86-residue protein sequence, read N- to C-terminus: Putative membrane protein insertion efficiency factor (86 aa).

A disordered region spans residues 66-86 (AGGHDPVPPVPPQRYPSAQEH).

This sequence belongs to the UPF0161 family.

It is found in the cell inner membrane. In terms of biological role, could be involved in insertion of integral membrane proteins into the membrane. In Nitratidesulfovibrio vulgaris (strain ATCC 29579 / DSM 644 / CCUG 34227 / NCIMB 8303 / VKM B-1760 / Hildenborough) (Desulfovibrio vulgaris), this protein is Putative membrane protein insertion efficiency factor.